Here is a 457-residue protein sequence, read N- to C-terminus: Argininosuccinate lyase (457 aa).

The protein belongs to the lyase 1 family. Argininosuccinate lyase subfamily.

Its subcellular location is the cytoplasm. The enzyme catalyses 2-(N(omega)-L-arginino)succinate = fumarate + L-arginine. The protein operates within amino-acid biosynthesis; L-arginine biosynthesis; L-arginine from L-ornithine and carbamoyl phosphate: step 3/3. This chain is Argininosuccinate lyase, found in Citrobacter koseri (strain ATCC BAA-895 / CDC 4225-83 / SGSC4696).